The primary structure comprises 581 residues: Eukaryotic translation initiation factor 2A (581 aa).

M1 bears the N-acetylmethionine mark. Residue A2 is modified to N-acetylalanine; in Eukaryotic translation initiation factor 2A, N-terminally processed. Phosphothreonine is present on T5. WD repeat units lie at residues 23-63 (PHFT…NIIN), 125-163 (QKKM…TIAN), and 356-401 (VASD…HKYD). Residues 432-533 (PSEVPSEEPK…SGDPEVDKKI (102 aa)) are disordered. The segment covering 494 to 503 (KKAAKQEARS) has biased composition (basic and acidic residues). 3 positions are modified to phosphoserine: S503, S513, and S522. Over residues 514–524 (APRNTVTQSAS) the composition is skewed to polar residues. Residues 527-578 (PEVDKKIKNLKKKLKAIEQLKEQAAAGKQLEKNQLEKIQKETALLQELEDLE) are a coiled coil.

It belongs to the WD repeat EIF2A family.

Its function is as follows. Functions in the early steps of protein synthesis of a small number of specific mRNAs. Acts by directing the binding of methionyl-tRNAi to 40S ribosomal subunits. In contrast to the eIF-2 complex, it binds methionyl-tRNAi to 40S subunits in a codon-dependent manner, whereas the eIF-2 complex binds methionyl-tRNAi to 40S subunits in a GTP-dependent manner. The polypeptide is Eukaryotic translation initiation factor 2A (Eif2a) (Mus musculus (Mouse)).